A 219-amino-acid chain; its full sequence is Deoxyribose-phosphate aldolase (219 aa).

The Proton donor/acceptor role is filled by D89. K151 functions as the Schiff-base intermediate with acetaldehyde in the catalytic mechanism. K180 serves as the catalytic Proton donor/acceptor.

The protein belongs to the DeoC/FbaB aldolase family. DeoC type 1 subfamily.

The protein resides in the cytoplasm. It catalyses the reaction 2-deoxy-D-ribose 5-phosphate = D-glyceraldehyde 3-phosphate + acetaldehyde. The protein operates within carbohydrate degradation; 2-deoxy-D-ribose 1-phosphate degradation; D-glyceraldehyde 3-phosphate and acetaldehyde from 2-deoxy-alpha-D-ribose 1-phosphate: step 2/2. In terms of biological role, catalyzes a reversible aldol reaction between acetaldehyde and D-glyceraldehyde 3-phosphate to generate 2-deoxy-D-ribose 5-phosphate. This is Deoxyribose-phosphate aldolase from Coprothermobacter proteolyticus (strain ATCC 35245 / DSM 5265 / OCM 4 / BT).